Consider the following 239-residue polypeptide: MYYCNRDNCNQTDNAKDKAHPRNLIPELCRQFYNLGWVTGTGGGISLKYGDEIYIAPSGVQKERIQPDDLFVCDIDEKDISCPPPYRNLKKSQCTPLFMNAYTMRDAGAVIHTHSKAAVMATLMFPGKEFLITHQEMIKGIKKGTSGGYYRYNDMLAVPIVENTPEEKDLKERMARAMTEYPDTCAVLVRRHGVYVWGDTWEKAKTMCECYDYLFDIAVQMKQHGLDPSAVPTEEKGIV.

Position 94 (Cys94) interacts with substrate. Zn(2+) is bound by residues His112 and His114. Catalysis depends on Glu136, which acts as the Proton donor/acceptor. Position 192 (His192) interacts with Zn(2+).

This sequence belongs to the aldolase class II family. MtnB subfamily. Requires Zn(2+) as cofactor.

The protein localises to the cytoplasm. It carries out the reaction 5-(methylsulfanyl)-D-ribulose 1-phosphate = 5-methylsulfanyl-2,3-dioxopentyl phosphate + H2O. The protein operates within amino-acid biosynthesis; L-methionine biosynthesis via salvage pathway; L-methionine from S-methyl-5-thio-alpha-D-ribose 1-phosphate: step 2/6. Its function is as follows. Catalyzes the dehydration of methylthioribulose-1-phosphate (MTRu-1-P) into 2,3-diketo-5-methylthiopentyl-1-phosphate (DK-MTP-1-P). Functions in the methionine salvage pathway. May play a role in apoptosis. This chain is Methylthioribulose-1-phosphate dehydratase, found in Xenopus laevis (African clawed frog).